The chain runs to 301 residues: rRNA methyltransferase 1, mitochondrial (301 aa).

Residues 1-11 constitute a mitochondrion transit peptide; it reads MIRSRVNLARE. Positions 121–141 are disordered; that stretch reads YNNKNGQDSPHNDLNEGKSSS.

Belongs to the class IV-like SAM-binding methyltransferase superfamily. RNA methyltransferase TrmH family.

Its subcellular location is the mitochondrion. The enzyme catalyses a guanosine in 21S rRNA + S-adenosyl-L-methionine = a 2'-O-methylguanosine in 21S rRNA + S-adenosyl-L-homocysteine + H(+). Functionally, S-adenosyl-L-methionine-dependent 2'-O-ribose methyltransferase that catalyzes the formation of the 2'-O-methylguanosine corresponding to position 2270 in S.cerevisiae 21S mitochondrial large subunit ribosomal RNA (mtLSU rRNA), a universally conserved modification in the peptidyl transferase domain of the mtLSU rRNA. The polypeptide is rRNA methyltransferase 1, mitochondrial (Schizosaccharomyces pombe (strain 972 / ATCC 24843) (Fission yeast)).